The primary structure comprises 1181 residues: MARHGDTRSPSPVGSTHSSSRRSRRDDDRYERTKRDDGRSYRRSRSPERRYRERDRESYRRRERSIARRDDYRDEDSYRPIRRDRSRDRRRSRDRGDDRDYRRRSRERDFRCRRDDSRDRARRRADDSTDLKHKSRRDSSRDRPKDSASRSRETSKPATPAPTAVPTDEEKRAERLAKLEAWKQKQAAERERKQREAAAAGGARSLLDEIDRKSGLSPAVGSPQSPATPSTTADATPAPYAGKFDPKAIAKSAAPAQAASNVLGDDVAVPTAVKASATSTTTKVQANKPSTASKASAPLKAKGVVGRFGLGTKQAADMEKSSATKTLGFGEEESTRRKLERLPTPPLDDANDTNKPEDNAEDDDDVDMHEGDTEEQTAAAARAAAERREERLQNEASKTNGDTTMNDAPHSQEGEKMEVDAKEEEEIDPLDAFMSELVETAPPKKTTGAKFSKAKEQQPEAIFGDENDPDITAVGEGDADDFLAIANKAKKKKDIPKVDHAKMEYEPFRKKFYTEPSDLAQMSEGELASLRLELDGIKVRGVDVPKPVQKWSQCGLGVQTLDVIDRLGYENPTSIQSQAIPAIMSGRDVIGVAKTGSGKTVAFLIPMFRHIKDQRPLENMEGPIGLIMTPTRELATQIHKDCKPFLKALNLRAVCAYGGAPIKDQIAELKRGAEIVVCTPGRMIDLLAANAGRVTNLRRVTYVVLDEADRMFDMGFEPQVMKIMANVRPDRQTVLFSATFPRNMEALARKTLNKPVEIVVGGKSVVAPEITQIVEVRNEDKKFVRLLELLGNLYSSDENEDARALIFVERQEAADTLLRELMRKGYPCMSIHGGKDQIDRDSTIEDFKAGIFPVLIATSVAARGLDVKQLKLVVNYDAPNHLEDYVHRAGRTGRAGNTGTAVTFLTEDQERFSVDIAKALKQSGQKVPEPVQQMVDSFLEKVKAGKEKASASGFGGKGLERLDQERDAARMRERRTYKTGEEGEEEEEKEEKNEQAEERFNKVLSSVQSASAPSLPGVPKGIDLDGKITVHRTEKDANGAKNPLDKVGSAVADIHARLSRAGVMRSGVPIDNRGPDAGAFHATLEINDFPQKARWAVTNRTNVAKILEATGTSITTKGSFYPTGKEPGPGENPKLYILVEGETELAVTNAMRELMRLLKEGTLAAADSDARAPVGGRYNVV.

Disordered stretches follow at residues 1–243 and 275–423; these read MARH…YAGK and ASAT…DAKE. Residues 8–17 are compositionally biased toward polar residues; that stretch reads RSPSPVGSTH. Basic and acidic residues-rich tracts occupy residues 24–87 and 94–155; these read RRDD…DRSR and DRGD…RETS. The segment covering 157–166 has biased composition (low complexity); that stretch reads PATPAPTAVP. Basic and acidic residues predominate over residues 168-196; that stretch reads DEEKRAERLAKLEAWKQKQAAERERKQRE. Composition is skewed to low complexity over residues 222–243 and 275–284; these read SPQSPATPSTTADATPAPYAGK and ASATSTTTKV. Positions 285–294 are enriched in polar residues; it reads QANKPSTASK. The span at 359 to 375 shows a compositional bias: acidic residues; sequence NAEDDDDVDMHEGDTEE. Residues 384 to 393 show a composition bias toward basic and acidic residues; that stretch reads AAERREERLQ. The segment covering 394 to 406 has biased composition (polar residues); that stretch reads NEASKTNGDTTMN. The segment covering 410–420 has biased composition (basic and acidic residues); it reads HSQEGEKMEVD. The Q motif motif lies at 549–577; that stretch reads QKWSQCGLGVQTLDVIDRLGYENPTSIQS. A Helicase ATP-binding domain is found at 580–758; it reads IPAIMSGRDV…RKTLNKPVEI (179 aa). Residue 593–600 participates in ATP binding; the sequence is AKTGSGKT. Positions 706-709 match the DEAD box motif; that stretch reads DEAD. A Helicase C-terminal domain is found at 785–935; sequence RLLELLGNLY…KVPEPVQQMV (151 aa). The disordered stretch occupies residues 949-998; that stretch reads ASASGFGGKGLERLDQERDAARMRERRTYKTGEEGEEEEEKEEKNEQAEE. Residues 958-981 show a composition bias toward basic and acidic residues; it reads GLERLDQERDAARMRERRTYKTGE.

The protein belongs to the DEAD box helicase family. DDX46/PRP5 subfamily.

The protein resides in the nucleus. It carries out the reaction ATP + H2O = ADP + phosphate + H(+). Its function is as follows. ATP-dependent RNA helicase involved spliceosome assembly and in nuclear splicing. Catalyzes an ATP-dependent conformational change of U2 snRNP. Bridges U1 and U2 snRNPs and enables stable U2 snRNP association with intron RNA. The chain is Pre-mRNA-processing ATP-dependent RNA helicase prp5 (prp5) from Aspergillus terreus (strain NIH 2624 / FGSC A1156).